The chain runs to 400 residues: MGKAKKVVLAYSGGVDTSVCIPYLKKEYGVEHVIAFAADLGQGDELDQIKQKAISAGASESLIGNLVKPFIEDFAFPAIRSNALYQGRYPLSTALARPLIAKNLVEIARELNADGVAHGCTGKGNDQVRFDVTIGALAPDLQLLTPAREWGMSREETIAYGEKYGIVPPVSKKTPYSIDLNLLGRSIEAGPLEDPFEMPSEEVFGITSSIADSPNEPEIVDILFENGYPVAINGEAMEPVSLIKKANSLAGKHGFGRLDIIEDRVVGIKSREIYETPGLLLLIKAHQEIESLTLPADLLDTKFRLERQWADLVYKGFWFSPLKEALDGFINYSQKQVNGTVRVRLFKGNVDVIGRKSKENSLYISDMSTYGSEDKFNHKSAEGFIYVWGLPSRIWSWINK.

ATP is bound by residues 10–18 and Ala-38; that span reads AYSGGVDTS. An L-citrulline-binding site is contributed by Tyr-89. Residue Gly-119 coordinates ATP. Positions 121, 125, and 126 each coordinate L-aspartate. L-citrulline is bound at residue Asn-125. L-citrulline contacts are provided by Arg-129, Ser-177, Ser-186, Glu-262, and Tyr-274.

Belongs to the argininosuccinate synthase family. Type 1 subfamily. Homotetramer.

The protein localises to the cytoplasm. The enzyme catalyses L-citrulline + L-aspartate + ATP = 2-(N(omega)-L-arginino)succinate + AMP + diphosphate + H(+). Its pathway is amino-acid biosynthesis; L-arginine biosynthesis; L-arginine from L-ornithine and carbamoyl phosphate: step 2/3. The sequence is that of Argininosuccinate synthase from Prochlorococcus marinus (strain NATL1A).